Reading from the N-terminus, the 507-residue chain is MAPRRTYQQEMAFLSRVSANQWIVNEGFVPNMRVPGTFYVNKHLETLMFEELQQHVDSGGHGGFLPAVKQLANVACLPGIVGKSIAMPDVHSGYGFCIGNVAAFDMSDPAAVVSPGGVGFDINCGVRVVRTNLMESDVADVKEKLAQALFDHIPVGVGSQGIIPTSAAGLESALEMGMDWSLREGYAWAEDKEHCEEYGRMLTADPNKVSARAKKRGLPQMGTLGAGNHYAEIQVVDEIFDAHAAEKMGVDAVGQVMVMIHSGSRGLGHQVATDALTEMERAMARDGIETNDRQLACARINSTEGQNYLSAMSCAANYAWVNRSSMTFLCRQAFAKMFDSTPDDLDMHVVYDVSHNIAKIEEHMVDGKLKTLLVHRKGSTRAFPPHHPLIPVDYQYTGQPVMIGGTMGTCSYILTGTQKGMDETFGSTCHGAGRARSRNNSRNKLDYAEVLENLKTKGISIRVASPKLVMEEAPESYKDVTEVVNTCHDAGISKKAVKLRPIAVVKG.

Mn(2+)-binding residues include D121, C124, H229, H261, and H355. 228–232 provides a ligand contact to GMP; it reads NHYAE. Residues 355–356, 404–407, S411, 430–433, and K506 each bind GMP; these read HN, GGTM, and HGAG. The GMP-histidine intermediate role is filled by H430.

It belongs to the RtcB family. In terms of assembly, catalytic component of the tRNA-splicing ligase complex. Mn(2+) is required as a cofactor.

The enzyme catalyses a 3'-end 3'-phospho-ribonucleotide-RNA + a 5'-end dephospho-ribonucleoside-RNA + GTP = a ribonucleotidyl-ribonucleotide-RNA + GMP + diphosphate. It carries out the reaction a 3'-end 2',3'-cyclophospho-ribonucleotide-RNA + a 5'-end dephospho-ribonucleoside-RNA + GTP + H2O = a ribonucleotidyl-ribonucleotide-RNA + GMP + diphosphate + H(+). Functionally, catalytic subunit of the tRNA-splicing ligase complex that acts by directly joining spliced tRNA halves to mature-sized tRNAs by incorporating the precursor-derived splice junction phosphate into the mature tRNA as a canonical 3',5'-phosphodiester. May act as an RNA ligase with broad substrate specificity, and may function toward other RNAs. The chain is RNA-splicing ligase RtcB homolog from Micromonas pusilla (strain CCMP1545) (Picoplanktonic green alga).